Reading from the N-terminus, the 451-residue chain is UPF0210 protein lin0538 (451 aa).

It belongs to the UPF0210 family. Homodimer.

In Listeria innocua serovar 6a (strain ATCC BAA-680 / CLIP 11262), this protein is UPF0210 protein lin0538.